The chain runs to 620 residues: Chaperone protein HscA homolog (620 aa).

This sequence belongs to the heat shock protein 70 family.

In terms of biological role, chaperone involved in the maturation of iron-sulfur cluster-containing proteins. Has a low intrinsic ATPase activity which is markedly stimulated by HscB. The protein is Chaperone protein HscA homolog of Herminiimonas arsenicoxydans.